The chain runs to 299 residues: Glycine--tRNA ligase alpha subunit (299 aa).

Belongs to the class-II aminoacyl-tRNA synthetase family. In terms of assembly, tetramer of two alpha and two beta subunits.

It localises to the cytoplasm. It catalyses the reaction tRNA(Gly) + glycine + ATP = glycyl-tRNA(Gly) + AMP + diphosphate. This is Glycine--tRNA ligase alpha subunit from Dichelobacter nodosus (strain VCS1703A).